A 313-amino-acid polypeptide reads, in one-letter code: Porphobilinogen deaminase (313 aa).

At Cys242 the chain carries S-(dipyrrolylmethanemethyl)cysteine.

The protein belongs to the HMBS family. Monomer. Requires dipyrromethane as cofactor.

It carries out the reaction 4 porphobilinogen + H2O = hydroxymethylbilane + 4 NH4(+). It functions in the pathway porphyrin-containing compound metabolism; protoporphyrin-IX biosynthesis; coproporphyrinogen-III from 5-aminolevulinate: step 2/4. In terms of biological role, tetrapolymerization of the monopyrrole PBG into the hydroxymethylbilane pre-uroporphyrinogen in several discrete steps. The polypeptide is Porphobilinogen deaminase (Yersinia enterocolitica serotype O:8 / biotype 1B (strain NCTC 13174 / 8081)).